Reading from the N-terminus, the 545-residue chain is DNA mismatch repair protein MutL (545 aa).

The segment at 517 to 545 (RRSGARGGGEARPRPQEESFPEAPLPREP) is disordered.

Belongs to the DNA mismatch repair MutL/HexB family.

In terms of biological role, this protein is involved in the repair of mismatches in DNA. It is required for dam-dependent methyl-directed DNA mismatch repair. May act as a 'molecular matchmaker', a protein that promotes the formation of a stable complex between two or more DNA-binding proteins in an ATP-dependent manner without itself being part of a final effector complex. This chain is DNA mismatch repair protein MutL, found in Thermus thermophilus (strain ATCC 27634 / DSM 579 / HB8).